The primary structure comprises 94 residues: Co-chaperonin GroES (94 aa).

Belongs to the GroES chaperonin family. As to quaternary structure, heptamer of 7 subunits arranged in a ring. Interacts with the chaperonin GroEL.

It localises to the cytoplasm. In terms of biological role, together with the chaperonin GroEL, plays an essential role in assisting protein folding. The GroEL-GroES system forms a nano-cage that allows encapsulation of the non-native substrate proteins and provides a physical environment optimized to promote and accelerate protein folding. GroES binds to the apical surface of the GroEL ring, thereby capping the opening of the GroEL channel. This chain is Co-chaperonin GroES, found in Ehrlichia ruminantium (strain Gardel).